We begin with the raw amino-acid sequence, 470 residues long: Transcriptional activator PmfR (470 aa).

As to quaternary structure, forms oligomers in solution, probably homotetramers.

Its pathway is alkaloid degradation; nicotine degradation [regulation]. Transcriptional regulator involved in the activation of the purU-mabO-folD-nepA-nepB and mao-ORF55-nbr operons implicated in the nicotine catabolic pathway. The sequence GTTT-14 bp-AAAC seems to be the core binding site of the regulator upstream of the -35 promoter region of the operon. The polypeptide is Transcriptional activator PmfR (pmfR) (Paenarthrobacter nicotinovorans (Arthrobacter nicotinovorans)).